A 1249-amino-acid chain; its full sequence is MVEAAPPGPGPLRRTFLVPEIKSLDQYDFSRAKAAASLAWVLRAAFGGAEHVPPELWEPFYTDQYAQEHVKPPVTRLLLSAELYCRAWRQALPQLETPPNPSALLALLARRGTVPALPERPVREADLRHQPILMGAHLAVIDALMAAFAFEWTKTLPGPLALTSLEHKLLFWVDTTVRRLQEKTEQEAAQRASPAAPADGAAPAQPSIRYRKDRVVARRAPCFPTVTSLQDLASGAALAATIHCYCPQLLRLEEVCLKDPMSVADSLYNLQLVQDFCASRLPRGCPLSLEDLLYVPPPLKVNLVVMLAELFMCFEVLKPDFVQVKDLPDGHAASPRGTEASPPQNNSGSSSPVFTFRHPLLSSGGPQSPLRGSTGSLKSSPSMSHMEALGKAWNRQLSRPLSQAVSFSTPFGLDSDVDVVMGDPVLLRSVSSDSLGPPRPAPARTPTQPPPEPGDLPTIEEALQIIHSAEPRLLPDGAADGSFYLHSPEGPSKPSLASPYLPEGTSKPLSDRPTKAPVYMPHPETPSKPSPCLVGEASKPPAPSEGSPKAVASSPAATNSEVKMTSFAERKKQLVKAEAEAGAGSPTSTPAPPEALSSEMSELSARLEEKRRAIEAQKRRIEAIFAKHRQRLGKSAFLQVQPREASGEAEAEAEEADSGPVPGGERPAGEGQGEPTSRPKAVTFSPDLGPVPHEGLGEYNRAVSKLSAALSSLQRDMQRLTDQQQRLLAPPEAPGSAPPPAAWVIPGPTTGPKAASPSPARRVPATRRSPGPGPSQSPRSPKHTRPAELRLAPLTRVLTPPHDVDSLPHLRKFSPSQVPVQTRSSILLAEETPPEEPAARPGLIEIPLGSLADPAAEDEGDGSPAGAEDSLEEEASSEGEPRVGLGFFYKDEDKPEDEMAQKRASLLERQQRRAEEARRRKQWQEVEKEQRREEAARLAQEEAPGPAPLVSAVPMATPAPAARAPAEEEVGPRKGDFTRQEYERRAQLKLMDDLDKVLRPRAAGSGGPGRGGRRATRPRSGCCDDSALARSPARGLLGSRLSKIYSQSTLSLSTVANEAHNNLGVKRPTSRAPSPSGLMSPSRLPGSRERDWENGSNASSPASVPEYTGPRLYKEPSAKSNKFIIHNALSHCCLAGKVNEPQKNRILEEIEKSKANHFLILFRDSSCQFRALYTLSGETEELSRLAGYGPRTVTPAMVEGIYKYNSDRKRFTQIPAKTMSMSVDAFTIQGHLWQGKKPTTPKKGGGTPK.

Disordered regions lie at residues 183 to 205, 328 to 385, 430 to 457, 473 to 609, 632 to 696, 714 to 1029, and 1061 to 1111; these read KTEQEAAQRASPAAPADGAAPAQ, PDGH…SMSH, VSSDSLGPPRPAPARTPTQPPPEPGDLP, LLPD…RLEE, LGKS…HEGL, QRDM…SALA, and NNLG…TGPR. Residue Thr-184 is modified to Phosphothreonine. Positions 189–205 are enriched in low complexity; the sequence is AQRASPAAPADGAAPAQ. Position 193 is a phosphoserine (Ser-193). The 110-residue stretch at 203-312 folds into the Calponin-homology (CH) domain; it reads PAQPSIRYRK…LVVMLAELFM (110 aa). 7 positions are modified to phosphoserine: Ser-334, Ser-341, Ser-347, Ser-351, Ser-368, Ser-373, and Ser-382. Over residues 341–352 the composition is skewed to low complexity; it reads SPPQNNSGSSSP. The segment covering 364–383 has biased composition (polar residues); that stretch reads GGPQSPLRGSTGSLKSSPSM. A compositionally biased stretch (pro residues) spans 437 to 454; that stretch reads PPRPAPARTPTQPPPEPG. Residues Ser-547, Ser-554, and Ser-560 each carry the phosphoserine modification. Over residues 568 to 579 the composition is skewed to basic and acidic residues; it reads AERKKQLVKAEA. Low complexity predominate over residues 594–604; it reads EALSSEMSELS. The stretch at 594-628 forms a coiled coil; the sequence is EALSSEMSELSARLEEKRRAIEAQKRRIEAIFAKH. Over residues 647–657 the composition is skewed to acidic residues; that stretch reads GEAEAEAEEAD. At Ser-685 the chain carries Phosphoserine. Positions 696-729 form a coiled coil; sequence LGEYNRAVSKLSAALSSLQRDMQRLTDQQQRLLA. Over residues 731–741 the composition is skewed to pro residues; it reads PEAPGSAPPPA. Low complexity predominate over residues 754-779; it reads AASPSPARRVPATRRSPGPGPSQSPR. Ser-769 carries the phosphoserine modification. The residue at position 799 (Thr-799) is a Phosphothreonine. Ser-814 carries the post-translational modification Phosphoserine. A compositionally biased stretch (polar residues) spans 814–825; sequence SPSQVPVQTRSS. Positions 889–940 are enriched in basic and acidic residues; that stretch reads YKDEDKPEDEMAQKRASLLERQQRRAEEARRRKQWQEVEKEQRREEAARLAQ. Positions 896-935 form a coiled coil; it reads EDEMAQKRASLLERQQRRAEEARRRKQWQEVEKEQRREEA. The segment covering 950-964 has biased composition (low complexity); that stretch reads VSAVPMATPAPAARA. Residues 970 to 998 show a composition bias toward basic and acidic residues; that stretch reads VGPRKGDFTRQEYERRAQLKLMDDLDKVL. Ser-1074 carries the phosphoserine modification. Positions 1109–1243 constitute a CKK domain; sequence GPRLYKEPSA…QGKKPTTPKK (135 aa).

It belongs to the CAMSAP1 family. As to quaternary structure, interacts with PLEKHA7. Interacts with CAMSAP2. Interacts with KATNA1 and KATNB1; leading to regulate the length of CAMSAP3-decorated microtubule stretches. Interacts with AKAP9; regulating Golgi assembly in epithelial cells. Interacts with MACF1. Interacts with AKNA.

Its subcellular location is the cytoplasm. The protein resides in the cytoskeleton. It is found in the cell junction. It localises to the adherens junction. The protein localises to the cilium axoneme. Its subcellular location is the cilium basal body. In terms of biological role, key microtubule-organizing protein that specifically binds the minus-end of non-centrosomal microtubules and regulates their dynamics and organization. Specifically recognizes growing microtubule minus-ends and autonomously decorates and stabilizes microtubule lattice formed by microtubule minus-end polymerization. Acts on free microtubule minus-ends that are not capped by microtubule-nucleating proteins or other factors and protects microtubule minus-ends from depolymerization. In addition, it also reduces the velocity of microtubule polymerization. Required for the biogenesis and the maintenance of zonula adherens by anchoring the minus-end of microtubules to zonula adherens and by recruiting the kinesin KIFC3 to those junctional sites. Required for orienting the apical-to-basal polarity of microtubules in epithelial cells: acts by tethering non-centrosomal microtubules to the apical cortex, leading to their longitudinal orientation. Plays a key role in early embryos, which lack centrosomes: accumulates at the microtubule bridges that connect pairs of cells and enables the formation of a non-centrosomal microtubule-organizing center that directs intracellular transport in the early embryo. Couples non-centrosomal microtubules with actin: interaction with MACF1 at the minus ends of non-centrosomal microtubules, tethers the microtubules to actin filaments, regulating focal adhesion size and cell migration. Plays a key role in the generation of non-centrosomal microtubules by accumulating in the pericentrosomal region and cooperating with KATNA1 to release non-centrosomal microtubules from the centrosome. Through the microtubule cytoskeleton, also regulates the organization of cellular organelles including the Golgi and the early endosomes. Through interaction with AKAP9, involved in translocation of Golgi vesicles in epithelial cells, where microtubules are mainly non-centrosomal. Plays an important role in motile cilia function by facilitatating proper orientation of basal bodies and formation of central microtubule pairs in motile cilia. In Homo sapiens (Human), this protein is Calmodulin-regulated spectrin-associated protein 3.